The following is a 276-amino-acid chain: Membrane protein insertase YidC 2 (276 aa).

The signal sequence occupies residues 1–22 (MGVKKKLKLTSLLGLSLLIMTA). Cys23 carries the N-palmitoyl cysteine lipid modification. Cys23 is lipidated: S-diacylglycerol cysteine. A run of 4 helical transmembrane segments spans residues 58 to 78 (ISIG…LLPV), 130 to 150 (SDSL…FQAL), 169 to 189 (VDTT…STWL), and 207 to 227 (GIPV…ALYW).

Belongs to the OXA1/ALB3/YidC family. Type 2 subfamily. Interacts with KhpB (also called EloR/Jag).

It is found in the cell membrane. Its function is as follows. Required for the insertion and/or proper folding and/or complex formation of integral membrane proteins into the membrane. Involved in integration of membrane proteins that insert both dependently and independently of the Sec translocase complex, as well as at least some lipoproteins. This is Membrane protein insertase YidC 2 from Streptococcus pneumoniae (strain ATCC BAA-255 / R6).